Reading from the N-terminus, the 138-residue chain is Beta-lactamase HcpB (138 aa).

TPR repeat units lie at residues 1–28 (MVGG…NEMF), 57–94 (GNGC…NDQD), and 97–130 (LILG…GSED). Cystine bridges form between Cys22–Cys30, Cys52–Cys60, Cys88–Cys96, and Cys124–Cys132.

This sequence belongs to the hcp beta-lactamase family.

The enzyme catalyses a beta-lactam + H2O = a substituted beta-amino acid. Hydrolyzes 6-aminopenicillinic acid and 7-aminocephalosporanic acid (ACA) derivatives. The polypeptide is Beta-lactamase HcpB (hcpB) (Helicobacter pylori (strain ATCC 700392 / 26695) (Campylobacter pylori)).